A 140-amino-acid polypeptide reads, in one-letter code: Fatty acid-binding protein 12 (140 aa).

A fatty acid is bound by residues arginine 107 and 127-129 (RTY).

The protein belongs to the calycin superfamily. Fatty-acid binding protein (FABP) family. In terms of tissue distribution, expressed in a number of retinoblastoma cell lines.

May play a role in lipid transport. This chain is Fatty acid-binding protein 12 (FABP12), found in Homo sapiens (Human).